We begin with the raw amino-acid sequence, 775 residues long: WD repeat-containing protein pop1 (775 aa).

In terms of domain architecture, F-box spans 298 to 345 (KNFLTGFPAEITNLVLTHLDAPSLCAVSQVSHHWYKLVSSNEELWKSL). WD repeat units lie at residues 444 to 472 (EHEGDVWTFEYVGDTLVTGSTDRTVRVWD), 484 to 538 (GHTS…RLWS), 575 to 603 (GHTDSVREVACLGDLIVSASYDGTLRVWK), 615 to 645 (GHVGRVYSVTINPSRQQCISAGTDAKIRIWN), and 657 to 687 (GHSNLVSQVTFNQNILVSASAPPDTSLRVWD).

Homodimer and heterodimer with pop2. Binds to cdc18, phosphorylated cig2, cul1, pip1 and skp1.

The protein localises to the nucleus. Its function is as follows. Involved in maintenance of ploidy through proteasome dependent degradation of CDK inhibitor rum1 and S-phase initiator cdc18. Functions as a recognition factor for rum1 and cdc18, which are subsequently ubiquitinated and targeted to the 26S proteasome for degradation. Together with pop2, required for cig2 instability during G2 and M phase and cig2 degradation in exponentially growing cells. Regulates cell-cycle progression under starvation through the rum1 protein. This is WD repeat-containing protein pop1 (pop1) from Schizosaccharomyces pombe (strain 972 / ATCC 24843) (Fission yeast).